A 246-amino-acid chain; its full sequence is Sortase B (246 aa).

Residues Ser5 to Trp24 traverse the membrane as a helical segment.

It belongs to the bacterial sortase family. Class B subfamily.

Its subcellular location is the cell membrane. Its function is as follows. Transpeptidase that anchors surface proteins to the cell wall. Recognizes and modifies its substrate by proteolytic cleavage of a C-terminal sorting signal. Following cleavage, a covalent intermediate is formed via a thioester bond between the sortase and its substrate, which is then transferred and covalently attached to the cell wall. Catalyzes a cell wall sorting reaction in which a surface protein with the consensus sorting signal NP(Q/K)(T/S)(N/G/S)(D/A) is cleaved between the fourth and fifth residues, and the fourth position is linked to the cell wall. This is not the major sortase in Listeria, it seems to anchor only 2 proteins, Hbp2 (SvpA) and Hbp1. This is Sortase B from Listeria monocytogenes serovar 1/2a (strain ATCC BAA-679 / EGD-e).